The sequence spans 249 residues: MMRILVSNDDGVNAPGIKALTEALAEIATVMTVAPDRNCSGASNSLTLTNPLRINRLDNGYISVHGTPTDCVHLAIRELCDGEPDMVVSGINAGANMGDDTLYSGTVAAAMEGRFLGFPAVAISLNGKAFKHYHTAAVYARRIVQGLLAHPIASDQILNINVPDLPLDEIKGISVTRLGARHKAEGIVRTQDPAGREIFWLGPPGLEQDASEGTDFHAIAHGYVSITPLTVDLTAYRQLSILQNWVDKI.

A divalent metal cation is bound by residues Asp9, Asp10, Ser40, and Asn92.

It belongs to the SurE nucleotidase family. The cofactor is a divalent metal cation.

The protein resides in the cytoplasm. It catalyses the reaction a ribonucleoside 5'-phosphate + H2O = a ribonucleoside + phosphate. Its function is as follows. Nucleotidase that shows phosphatase activity on nucleoside 5'-monophosphates. The sequence is that of 5'-nucleotidase SurE from Shewanella oneidensis (strain ATCC 700550 / JCM 31522 / CIP 106686 / LMG 19005 / NCIMB 14063 / MR-1).